The sequence spans 629 residues: tRNA uridine 5-carboxymethylaminomethyl modification enzyme MnmG (629 aa).

Residues 13–18, Val-125, and Ser-180 each bind FAD; that span reads GGGHAG. 273 to 287 provides a ligand contact to NAD(+); it reads GPRYCPSIEDKVMRF. Gln-370 is an FAD binding site.

This sequence belongs to the MnmG family. Homodimer. Heterotetramer of two MnmE and two MnmG subunits. FAD is required as a cofactor.

The protein resides in the cytoplasm. Functionally, NAD-binding protein involved in the addition of a carboxymethylaminomethyl (cmnm) group at the wobble position (U34) of certain tRNAs, forming tRNA-cmnm(5)s(2)U34. The sequence is that of tRNA uridine 5-carboxymethylaminomethyl modification enzyme MnmG from Klebsiella pneumoniae subsp. pneumoniae (strain ATCC 700721 / MGH 78578).